Here is a 239-residue protein sequence, read N- to C-terminus: Glucosamine-6-phosphate deaminase (239 aa).

The active-site Proton acceptor; for enolization step is the D62. Residue N128 is the For ring-opening step of the active site. The active-site Proton acceptor; for ring-opening step is H130. E135 (for ring-opening step) is an active-site residue.

The protein belongs to the glucosamine/galactosamine-6-phosphate isomerase family. NagB subfamily.

It carries out the reaction alpha-D-glucosamine 6-phosphate + H2O = beta-D-fructose 6-phosphate + NH4(+). Its pathway is amino-sugar metabolism; N-acetylneuraminate degradation; D-fructose 6-phosphate from N-acetylneuraminate: step 5/5. Its function is as follows. Catalyzes the reversible isomerization-deamination of glucosamine 6-phosphate (GlcN6P) to form fructose 6-phosphate (Fru6P) and ammonium ion. The chain is Glucosamine-6-phosphate deaminase from Lactobacillus acidophilus (strain ATCC 700396 / NCK56 / N2 / NCFM).